Reading from the N-terminus, the 146-residue chain is VHLTPEEKSAVTALWGKVNVDEVGGEALGRLLVVYPWTQRFFESFGDLSTPDAVMGNPKVKAHGKKVLGAFSDGLAHLDNLKGTFAQLSELHCDKLHVDPENFRLLGNVLVCVLAHHFGKEFTPQVQAAYQKVVAGVANALAHKYH.

Val1 is subject to N-acetylvaline. Residues 2 to 146 (HLTPEEKSAV…VANALAHKYH (145 aa)) enclose the Globin domain. Thr12 is modified (phosphothreonine). Ser44 is subject to Phosphoserine. N6-acetyllysine is present on Lys59. His63 serves as a coordination point for heme b. Lys82 carries the post-translational modification N6-acetyllysine. Heme b is bound at residue His92. At Cys93 the chain carries S-nitrosocysteine. Lys144 is modified (N6-acetyllysine).

Belongs to the globin family. In terms of assembly, heterotetramer of two alpha chains and two beta chains. In terms of tissue distribution, red blood cells.

Its function is as follows. Involved in oxygen transport from the lung to the various peripheral tissues. The chain is Hemoglobin subunit beta (HBB) from Hylobates lar (Lar gibbon).